Consider the following 926-residue polypeptide: Alanine--tRNA ligase (926 aa).

Zn(2+) is bound by residues histidine 611, histidine 615, cysteine 714, and histidine 718.

Belongs to the class-II aminoacyl-tRNA synthetase family. It depends on Zn(2+) as a cofactor.

It is found in the cytoplasm. The enzyme catalyses tRNA(Ala) + L-alanine + ATP = L-alanyl-tRNA(Ala) + AMP + diphosphate. In terms of biological role, catalyzes the attachment of alanine to tRNA(Ala) in a two-step reaction: alanine is first activated by ATP to form Ala-AMP and then transferred to the acceptor end of tRNA(Ala). Also edits incorrectly charged Ser-tRNA(Ala) and Gly-tRNA(Ala) via its editing domain. This is Alanine--tRNA ligase from Methanosarcina mazei (strain ATCC BAA-159 / DSM 3647 / Goe1 / Go1 / JCM 11833 / OCM 88) (Methanosarcina frisia).